Reading from the N-terminus, the 252-residue chain is Indole-3-glycerol phosphate synthase (252 aa).

The protein belongs to the TrpC family.

It catalyses the reaction 1-(2-carboxyphenylamino)-1-deoxy-D-ribulose 5-phosphate + H(+) = (1S,2R)-1-C-(indol-3-yl)glycerol 3-phosphate + CO2 + H2O. It participates in amino-acid biosynthesis; L-tryptophan biosynthesis; L-tryptophan from chorismate: step 4/5. This Listeria welshimeri serovar 6b (strain ATCC 35897 / DSM 20650 / CCUG 15529 / CIP 8149 / NCTC 11857 / SLCC 5334 / V8) protein is Indole-3-glycerol phosphate synthase.